The sequence spans 410 residues: E3 ubiquitin-protein ligase MARCHF4 (410 aa).

An N-terminal signal peptide occupies residues 1–18 (MLMPLCGLLWWWWCCCSG). The tract at residues 92–136 (GPREVVGREPPPVPPPPPLPPSSVEDDWGGPATEPPASLLSSASS) is disordered. Residues 100–112 (EPPPVPPPPPLPP) show a composition bias toward pro residues. The span at 126–136 (PPASLLSSASS) shows a compositional bias: low complexity. The RING-CH-type zinc finger occupies 155 to 215 (DSGMRTPLCR…ELCYYKYHVI (61 aa)). Cys-163, Cys-166, Cys-179, Cys-181, His-189, Cys-192, Cys-205, and Cys-208 together coordinate Zn(2+). 2 helical membrane passes run 238–258 (VAAAILGSLFLIASISWLIWS) and 272–292 (LFQICYGMYGFMDVVCIGLII). 2 disordered regions span residues 324 to 372 (EDQK…SGPL) and 390 to 410 (PHEQRSPPGSSRELVMRVTTV). The segment covering 333–346 (NPRTSSSTQANIPS) has biased composition (polar residues). The span at 352–366 (AGTPAPEQGPAQAAG) shows a compositional bias: low complexity.

As to expression, expressed in brain and placenta.

It is found in the golgi apparatus membrane. It carries out the reaction S-ubiquitinyl-[E2 ubiquitin-conjugating enzyme]-L-cysteine + [acceptor protein]-L-lysine = [E2 ubiquitin-conjugating enzyme]-L-cysteine + N(6)-ubiquitinyl-[acceptor protein]-L-lysine.. Its pathway is protein modification; protein ubiquitination. E3 ubiquitin-protein ligase that may mediate ubiquitination of MHC-I and CD4, and promote their subsequent endocytosis and sorting to lysosomes via multivesicular bodies. E3 ubiquitin ligases accept ubiquitin from an E2 ubiquitin-conjugating enzyme in the form of a thioester and then directly transfer the ubiquitin to targeted substrates. This chain is E3 ubiquitin-protein ligase MARCHF4, found in Homo sapiens (Human).